Here is a 201-residue protein sequence, read N- to C-terminus: MYB-like transcription factor EOBI (201 aa).

2 consecutive HTH myb-type domains span residues 10–62 and 63–117; these read DVEV…LNYL and RPDV…QKHI. DNA-binding regions (H-T-H motif) lie at residues 38–62 and 90–113; these read WNSL…LNYL and WSKI…RTRI. The segment at 121–170 is disordered; the sequence is DQNMKKPSKCEQNDQKAISTSQASTGPTDTIDSYSPSSYTENTNNNMENI. The segment covering 135-159 has biased composition (polar residues); it reads QKAISTSQASTGPTDTIDSYSPSSY. A compositionally biased stretch (low complexity) spans 160–169; sequence TENTNNNMEN.

In terms of tissue distribution, expressed exclusively in flower organs. Accumulates mostly in flower limbs, to a lower extent in pistils and flower tubes, and, at low levels, in stamens.

The protein localises to the nucleus. Functionally, MYB-type transcription factor controlling the production of volatile organic compounds (VOCs), including floral volatile benzenoids and phenylpropanoids (FVBP), in flowers of fragrant cultivars (e.g. cv. Mitchell and cv. V26) by regulating the expression of ODO1, a key regulator of the shikimate pathway, and of several biosynthetic floral scent-related genes (e.g. IGS, EGS, BSMT1, BSMT2, PAL1, PAL2, EPSPS, DAHPS, CS, CM1, ADT1 and PPA-AT). Binds to and activates the promoters of at least ODO1, IGS1 and PAL1. The sequence is that of MYB-like transcription factor EOBI from Petunia hybrida (Petunia).